The sequence spans 201 residues: Imidazole glycerol phosphate synthase subunit HisH (201 aa).

Residues 2-201 (KVVILDTGCA…ARLLKNFLEM (200 aa)) form the Glutamine amidotransferase type-1 domain. Cysteine 77 acts as the Nucleophile in catalysis. Residues histidine 183 and glutamate 185 contribute to the active site.

As to quaternary structure, heterodimer of HisH and HisF.

The protein resides in the cytoplasm. It catalyses the reaction 5-[(5-phospho-1-deoxy-D-ribulos-1-ylimino)methylamino]-1-(5-phospho-beta-D-ribosyl)imidazole-4-carboxamide + L-glutamine = D-erythro-1-(imidazol-4-yl)glycerol 3-phosphate + 5-amino-1-(5-phospho-beta-D-ribosyl)imidazole-4-carboxamide + L-glutamate + H(+). The enzyme catalyses L-glutamine + H2O = L-glutamate + NH4(+). Its pathway is amino-acid biosynthesis; L-histidine biosynthesis; L-histidine from 5-phospho-alpha-D-ribose 1-diphosphate: step 5/9. Functionally, IGPS catalyzes the conversion of PRFAR and glutamine to IGP, AICAR and glutamate. The HisH subunit catalyzes the hydrolysis of glutamine to glutamate and ammonia as part of the synthesis of IGP and AICAR. The resulting ammonia molecule is channeled to the active site of HisF. In Photorhabdus laumondii subsp. laumondii (strain DSM 15139 / CIP 105565 / TT01) (Photorhabdus luminescens subsp. laumondii), this protein is Imidazole glycerol phosphate synthase subunit HisH.